The chain runs to 1257 residues: Endochitinase A (1257 aa).

An N-terminal signal peptide occupies residues 1-21 (MVFKPLTIAAAIAGLTPFVSA). Residues 28–339 (SNVAVYYGQG…DVIKDILVAV (312 aa)) form the GH18 domain. The active-site Proton donor is Glu175. 3 disordered regions span residues 364-429 (TPVA…STPV), 595-980 (TPAA…LAPI), and 1141-1174 (DALT…PTTT). Over residues 595-696 (TPAASSSPAV…STPVRSTSSV (102 aa)) the composition is skewed to low complexity. Positions 700-715 (KSSSAPVIPKPSSTVI) are enriched in polar residues. Positions 716–935 (ATFTSSSGSL…ASGSGAQDST (220 aa)) are enriched in low complexity. A glycan (N-linked (GlcNAc...) asparagine) is linked at Asn825. The span at 940-964 (HASTLSPSYSTPLASASGQTGSPTT) shows a compositional bias: polar residues. Asn973 carries N-linked (GlcNAc...) asparagine glycosylation. Residues 1145–1154 (ASPSGSQPAG) are compositionally biased toward polar residues. Low complexity predominate over residues 1156-1174 (SSPGQSAPTAPASTAPTTT). Gly1231 carries GPI-anchor amidated glycine lipidation. Positions 1232-1257 (AASRVSRLQHGAGAVSAFALFLLAAI) are cleaved as a propeptide — removed in mature form.

This sequence belongs to the glycosyl hydrolase 18 family. Chitinase class III subfamily. In terms of processing, O-glycosylated.

The protein localises to the cell membrane. Its subcellular location is the secreted. It is found in the cell wall. It catalyses the reaction Random endo-hydrolysis of N-acetyl-beta-D-glucosaminide (1-&gt;4)-beta-linkages in chitin and chitodextrins.. In terms of biological role, GPI-anchored chitinase involved in the degradation of chitin, a component of the cell walls of fungi and exoskeletal elements of some animals (including worms and arthropods). Required to reshape the cell wall at the sites where cell wall remodeling and/or cell wall maturation actively take place such as sites of conidia formation. The polypeptide is Endochitinase A (ctcA) (Aspergillus niger (strain ATCC MYA-4892 / CBS 513.88 / FGSC A1513)).